Reading from the N-terminus, the 475-residue chain is MGSKSPEGHRQTPDASNSSELKPANPNPKPARNGSQSADLDGGNLDDDNDDDGEANEEAGVKTSADSTDKKKKRKRSKKKTKKGTLPLKQSSPPRVLVSSLFPSGYPIGECVPYQDDNTSRTTDEELRYNSRLWDKDFLDEYRQAAEIHRQVRQYAQNELIKPGASLTTIAEGIEDGVRALSGHQGLEPGDGFKAGMGFPTGLCLNNVAAHWTPNPGAKDVFLDKSDVLKVDFGVHVNGRIVDSAFTVAFDHTYDNLLTAVKEATNTGIMHAGIDARVSEIGAAIQEVMESYEVEIAGKTHPVKAIRNITGHDILRYNIHGGKQVPFIKNDRPDKMEEGEVFAIETFGSTGRGVLHDDVGLCLSNVFSKANAPQVGVYGYGRNTDVSGANLRLSSAKNLLKTIDANFGSLVFCRRYLERLGVEKYHLGMRHLIDNGIVEYYEPLVDVKGSYTAQFEHTILLHNGGKEVISRGDDY.

The segment covering 1-12 has biased composition (basic and acidic residues); that stretch reads MGSKSPEGHRQT. The interval 1–97 is disordered; that stretch reads MGSKSPEGHR…LKQSSPPRVL (97 aa). Residues 44–57 show a composition bias toward acidic residues; the sequence is NLDDDNDDDGEANE. The span at 70 to 83 shows a compositional bias: basic residues; it reads KKKKRKRSKKKTKK. Substrate is bound at residue histidine 211. 3 residues coordinate a divalent metal cation: aspartate 232, aspartate 243, and histidine 312. Histidine 320 contributes to the substrate binding site. The a divalent metal cation site is built by glutamate 345 and glutamate 456.

Belongs to the peptidase M24A family. Methionine aminopeptidase eukaryotic type 2 subfamily. Requires Co(2+) as cofactor. Zn(2+) is required as a cofactor. The cofactor is Mn(2+). Fe(2+) serves as cofactor.

The protein localises to the cytoplasm. It carries out the reaction Release of N-terminal amino acids, preferentially methionine, from peptides and arylamides.. Cotranslationally removes the N-terminal methionine from nascent proteins. The N-terminal methionine is often cleaved when the second residue in the primary sequence is small and uncharged (Met-Ala-, Cys, Gly, Pro, Ser, Thr, or Val). In Aspergillus niger (strain ATCC MYA-4892 / CBS 513.88 / FGSC A1513), this protein is Methionine aminopeptidase 2-1.